The primary structure comprises 317 residues: Protein phosphatase 1 regulatory subunit 3C-B (317 aa).

The CBM21 domain maps to 150-258 (RNRLKKNLVC…NNDGKNYKLV (109 aa)).

Interacts with PPP1CC catalytic subunit of PP1 and associates with glycogen. Forms complexes with glycogen phosphorylase, glycogen synthase and phosphorylase kinase which is necessary for its regulation of PP1 activity.

Its function is as follows. Acts as a glycogen-targeting subunit for PP1 and regulates its activity. Activates glycogen synthase, reduces glycogen phosphorylase activity and limits glycogen breakdown. This is Protein phosphatase 1 regulatory subunit 3C-B (ppp1r3cb) from Danio rerio (Zebrafish).